The following is a 218-amino-acid chain: Octanoyltransferase (218 aa).

A BPL/LPL catalytic domain is found at 32–218 (GEAAEAIWLL…LRTFPQHFPD (187 aa)). Residues 71–78 (RGGQYTYH), 151–153 (AIG), and 164–166 (GLS) each bind substrate. Cys182 functions as the Acyl-thioester intermediate in the catalytic mechanism.

It belongs to the LipB family.

It localises to the cytoplasm. The catalysed reaction is octanoyl-[ACP] + L-lysyl-[protein] = N(6)-octanoyl-L-lysyl-[protein] + holo-[ACP] + H(+). The protein operates within protein modification; protein lipoylation via endogenous pathway; protein N(6)-(lipoyl)lysine from octanoyl-[acyl-carrier-protein]: step 1/2. Catalyzes the transfer of endogenously produced octanoic acid from octanoyl-acyl-carrier-protein onto the lipoyl domains of lipoate-dependent enzymes. Lipoyl-ACP can also act as a substrate although octanoyl-ACP is likely to be the physiological substrate. This Cereibacter sphaeroides (strain ATCC 17023 / DSM 158 / JCM 6121 / CCUG 31486 / LMG 2827 / NBRC 12203 / NCIMB 8253 / ATH 2.4.1.) (Rhodobacter sphaeroides) protein is Octanoyltransferase.